The primary structure comprises 261 residues: 5-oxoprolinase subunit A (261 aa).

This sequence belongs to the LamB/PxpA family. In terms of assembly, forms a complex composed of PxpA, PxpB and PxpC.

It carries out the reaction 5-oxo-L-proline + ATP + 2 H2O = L-glutamate + ADP + phosphate + H(+). Catalyzes the cleavage of 5-oxoproline to form L-glutamate coupled to the hydrolysis of ATP to ADP and inorganic phosphate. The polypeptide is 5-oxoprolinase subunit A (Coprothermobacter proteolyticus (strain ATCC 35245 / DSM 5265 / OCM 4 / BT)).